Consider the following 243-residue polypeptide: Pyrimidodiazepine synthase (243 aa).

One can recognise a GST N-terminal domain in the interval 20 to 102; the sequence is GILRLYSMRF…YLDEQYPLRP (83 aa). Cysteine 30 serves as the catalytic Nucleophile. Glutathione-binding positions include lysine 57, valine 70, and 86-87; that span reads ES. The GST C-terminal domain occupies 107–230; that stretch reads DPLKKVQDKL…VQAEFLRTRS (124 aa).

This sequence belongs to the GST superfamily. Omega family. Homodimer.

The catalysed reaction is 2-amino-6-acetyl-3,7,8,9-tetrahydro-3H-pyrimido[4,5-b][1,4]diazepin-4-one + glutathione disulfide + H2O = 6-pyruvoyl-5,6,7,8-tetrahydropterin + 2 glutathione. Mediates the conversion of 2-amino-4-oxo-6-pyruvoyl-5,6,7,8-tetrahydropteridine (6-PTP; also named 6-pyruvoyltetrahydropterin) to 2-amino-6-acetyl-3,7,8,9-tetrahydro-3H-pyrimido(4,5-b)[1,4]diazepin-4-one (pyrimidodiazepine or PDA), a key intermediate in red eye pigment drosopterin biosynthesis. This is Pyrimidodiazepine synthase from Drosophila melanogaster (Fruit fly).